Here is a 214-residue protein sequence, read N- to C-terminus: Probable GTP-binding protein EngB (214 aa).

An EngB-type G domain is found at 30–204; sequence EGFEVAFAGR…YTVLAGWMEL (175 aa). GTP is bound by residues 38-45, 64-68, 82-85, 149-152, and 182-185; these read GRSNAGKS, GRTQL, DLPG, TKAD, and LFSA. 2 residues coordinate Mg(2+): Ser-45 and Thr-66.

It belongs to the TRAFAC class TrmE-Era-EngA-EngB-Septin-like GTPase superfamily. EngB GTPase family. Requires Mg(2+) as cofactor.

Functionally, necessary for normal cell division and for the maintenance of normal septation. The sequence is that of Probable GTP-binding protein EngB from Pseudomonas fluorescens (strain Pf0-1).